A 234-amino-acid chain; its full sequence is MKELIEFLEKTGLKTEADSLRNGGTELNPQSNIGTLGAKKLAAALKDNKSLKYLNLIGSYIGEEGARALAEALKDNESLKELYLTPADISTVTLNRIKEYIQRNTDLYYKEQQQYNKQLISSIKANEIKQAESIIPFIDPKYSNSVDENNNTALHYAVDKNLEKLSISLINKMSIETISIGNMYNNTALHYATDNGLEVISWFLINNMTQKALDMVNTDGNTALDYAIHNRHLL.

2 ANK repeats span residues 149 to 180 (NNNT…TISI) and 184 to 213 (YNNT…QKAL).

The sequence is that of Putative ankyrin repeat protein RF_0063 from Rickettsia felis (strain ATCC VR-1525 / URRWXCal2) (Rickettsia azadi).